The chain runs to 345 residues: N-acetyl-gamma-glutamyl-phosphate reductase (345 aa).

Residue Cys-149 is part of the active site.

The protein belongs to the NAGSA dehydrogenase family. Type 1 subfamily.

It localises to the cytoplasm. It catalyses the reaction N-acetyl-L-glutamate 5-semialdehyde + phosphate + NADP(+) = N-acetyl-L-glutamyl 5-phosphate + NADPH + H(+). Its pathway is amino-acid biosynthesis; L-arginine biosynthesis; N(2)-acetyl-L-ornithine from L-glutamate: step 3/4. Its function is as follows. Catalyzes the NADPH-dependent reduction of N-acetyl-5-glutamyl phosphate to yield N-acetyl-L-glutamate 5-semialdehyde. This Bacillus cytotoxicus (strain DSM 22905 / CIP 110041 / 391-98 / NVH 391-98) protein is N-acetyl-gamma-glutamyl-phosphate reductase.